Reading from the N-terminus, the 93-residue chain is uncharacterized protein (93 aa).

This is an uncharacterized protein from Rickettsia conorii (strain ATCC VR-613 / Malish 7).